Reading from the N-terminus, the 53-residue chain is Ferredoxin B (53 aa).

The interval G1–T35 is N-terminal extension. N6-methyllysine is present on K29. The region spanning G34–A53 is the 4Fe-4S ferredoxin-type 1 domain. The [3Fe-4S] cluster site is built by C44 and C50.

It depends on [3Fe-4S] cluster as a cofactor. The cofactor is [4Fe-4S] cluster.

Its function is as follows. Ferredoxins are iron-sulfur proteins that transfer electrons in a wide variety of metabolic reactions. The protein is Ferredoxin B of Sulfuracidifex metallicus (Sulfolobus metallicus).